The sequence spans 683 residues: Acetyl-coenzyme A synthetase 2 (683 aa).

CoA is bound by residues 207 to 210 (RGGK) and Thr326. ATP contacts are provided by residues 402–404 (GEP), 426–431 (DTFWQT), Asp517, and Arg532. Ser540 serves as a coordination point for CoA. Position 543 (Arg543) interacts with ATP. Position 613 (Arg613) interacts with CoA.

It belongs to the ATP-dependent AMP-binding enzyme family.

The enzyme catalyses acetate + ATP + CoA = acetyl-CoA + AMP + diphosphate. This chain is Acetyl-coenzyme A synthetase 2 (ACS2), found in Candida glabrata (strain ATCC 2001 / BCRC 20586 / JCM 3761 / NBRC 0622 / NRRL Y-65 / CBS 138) (Yeast).